The sequence spans 426 residues: Serine--tRNA ligase (426 aa).

231-233 (TAE) provides a ligand contact to L-serine. 262-264 (RSE) serves as a coordination point for ATP. Position 285 (E285) interacts with L-serine. 349–352 (EISS) provides a ligand contact to ATP. S385 is a binding site for L-serine.

Belongs to the class-II aminoacyl-tRNA synthetase family. Type-1 seryl-tRNA synthetase subfamily. Homodimer. The tRNA molecule binds across the dimer.

The protein resides in the cytoplasm. The enzyme catalyses tRNA(Ser) + L-serine + ATP = L-seryl-tRNA(Ser) + AMP + diphosphate + H(+). It carries out the reaction tRNA(Sec) + L-serine + ATP = L-seryl-tRNA(Sec) + AMP + diphosphate + H(+). Its pathway is aminoacyl-tRNA biosynthesis; selenocysteinyl-tRNA(Sec) biosynthesis; L-seryl-tRNA(Sec) from L-serine and tRNA(Sec): step 1/1. Functionally, catalyzes the attachment of serine to tRNA(Ser). Is also able to aminoacylate tRNA(Sec) with serine, to form the misacylated tRNA L-seryl-tRNA(Sec), which will be further converted into selenocysteinyl-tRNA(Sec). This is Serine--tRNA ligase from Brevibacillus brevis (strain 47 / JCM 6285 / NBRC 100599).